The chain runs to 75 residues: Large ribosomal subunit protein eL14 (75 aa).

This sequence belongs to the eukaryotic ribosomal protein eL14 family.

The protein is Large ribosomal subunit protein eL14 of Methanothermobacter thermautotrophicus (strain ATCC 29096 / DSM 1053 / JCM 10044 / NBRC 100330 / Delta H) (Methanobacterium thermoautotrophicum).